Here is a 488-residue protein sequence, read N- to C-terminus: UDP-N-acetylmuramoyl-L-alanyl-D-glutamate--2,6-diaminopimelate ligase (488 aa).

Position 31 (Ser31) interacts with UDP-N-acetyl-alpha-D-muramoyl-L-alanyl-D-glutamate. 109–115 (GTNGKTS) is an ATP binding site. UDP-N-acetyl-alpha-D-muramoyl-L-alanyl-D-glutamate contacts are provided by residues Asn150, 151–152 (TT), Ser178, and Arg186. Lys218 bears the N6-carboxylysine mark. Meso-2,6-diaminopimelate is bound by residues Arg384, 408–411 (DNPR), Gly458, and Glu462. The short motif at 408 to 411 (DNPR) is the Meso-diaminopimelate recognition motif element.

Belongs to the MurCDEF family. MurE subfamily. The cofactor is Mg(2+). Carboxylation is probably crucial for Mg(2+) binding and, consequently, for the gamma-phosphate positioning of ATP.

Its subcellular location is the cytoplasm. It carries out the reaction UDP-N-acetyl-alpha-D-muramoyl-L-alanyl-D-glutamate + meso-2,6-diaminopimelate + ATP = UDP-N-acetyl-alpha-D-muramoyl-L-alanyl-gamma-D-glutamyl-meso-2,6-diaminopimelate + ADP + phosphate + H(+). It functions in the pathway cell wall biogenesis; peptidoglycan biosynthesis. Catalyzes the addition of meso-diaminopimelic acid to the nucleotide precursor UDP-N-acetylmuramoyl-L-alanyl-D-glutamate (UMAG) in the biosynthesis of bacterial cell-wall peptidoglycan. This chain is UDP-N-acetylmuramoyl-L-alanyl-D-glutamate--2,6-diaminopimelate ligase, found in Bacillus licheniformis (strain ATCC 14580 / DSM 13 / JCM 2505 / CCUG 7422 / NBRC 12200 / NCIMB 9375 / NCTC 10341 / NRRL NRS-1264 / Gibson 46).